A 69-amino-acid chain; its full sequence is Cytochrome c oxidase subunit 8A, mitochondrial (69 aa).

The transit peptide at 1 to 25 (MSVLTPLLLRGLTGSARRLPVPRAK) directs the protein to the mitochondrion. The SIFI-degron signature appears at 2-19 (SVLTPLLLRGLTGSARRL). Over 26–36 (IHSLPPEGKLG) the chain is Mitochondrial matrix. The chain crosses the membrane as a helical span at residues 37–60 (IMELAVGLTSCFVTFLLPAGWILS). The Mitochondrial intermembrane segment spans residues 61-69 (HLETYRRPE).

This sequence belongs to the cytochrome c oxidase VIII family. As to quaternary structure, component of the cytochrome c oxidase (complex IV, CIV), a multisubunit enzyme composed of 14 subunits. The complex is composed of a catalytic core of 3 subunits MT-CO1, MT-CO2 and MT-CO3, encoded in the mitochondrial DNA, and 11 supernumerary subunits COX4I1 (or COX4I2), COX5A, COX5B, COX6A1 (or COX6A2), COX6B1 (or COX6B2), COX6C, COX7A2 (or COX7A1), COX7B, COX7C, COX8A and NDUFA4, which are encoded in the nuclear genome. The complex exists as a monomer or a dimer and forms supercomplexes (SCs) in the inner mitochondrial membrane with NADH-ubiquinone oxidoreductase (complex I, CI) and ubiquinol-cytochrome c oxidoreductase (cytochrome b-c1 complex, complex III, CIII), resulting in different assemblies (supercomplex SCI(1)III(2)IV(1) and megacomplex MCI(2)III(2)IV(2)). Post-translationally, in response to mitochondrial stress, the precursor protein is ubiquitinated by the SIFI complex in the cytoplasm before mitochondrial import, leading to its degradation. Within the SIFI complex, UBR4 initiates ubiquitin chain that are further elongated or branched by KCMF1. As to expression, widely expressed.

Its subcellular location is the mitochondrion inner membrane. It participates in energy metabolism; oxidative phosphorylation. Functionally, component of the cytochrome c oxidase, the last enzyme in the mitochondrial electron transport chain which drives oxidative phosphorylation. The respiratory chain contains 3 multisubunit complexes succinate dehydrogenase (complex II, CII), ubiquinol-cytochrome c oxidoreductase (cytochrome b-c1 complex, complex III, CIII) and cytochrome c oxidase (complex IV, CIV), that cooperate to transfer electrons derived from NADH and succinate to molecular oxygen, creating an electrochemical gradient over the inner membrane that drives transmembrane transport and the ATP synthase. Cytochrome c oxidase is the component of the respiratory chain that catalyzes the reduction of oxygen to water. Electrons originating from reduced cytochrome c in the intermembrane space (IMS) are transferred via the dinuclear copper A center (CU(A)) of subunit 2 and heme A of subunit 1 to the active site in subunit 1, a binuclear center (BNC) formed by heme A3 and copper B (CU(B)). The BNC reduces molecular oxygen to 2 water molecules using 4 electrons from cytochrome c in the IMS and 4 protons from the mitochondrial matrix. This chain is Cytochrome c oxidase subunit 8A, mitochondrial (COX8A), found in Homo sapiens (Human).